A 130-amino-acid chain; its full sequence is ATP synthase epsilon chain (130 aa).

It belongs to the ATPase epsilon chain family. In terms of assembly, F-type ATPases have 2 components, CF(1) - the catalytic core - and CF(0) - the membrane proton channel. CF(1) has five subunits: alpha(3), beta(3), gamma(1), delta(1), epsilon(1). CF(0) has three main subunits: a, b and c.

It is found in the cell inner membrane. Functionally, produces ATP from ADP in the presence of a proton gradient across the membrane. The protein is ATP synthase epsilon chain of Campylobacter hominis (strain ATCC BAA-381 / DSM 21671 / CCUG 45161 / LMG 19568 / NCTC 13146 / CH001A).